A 113-amino-acid chain; its full sequence is Protein SPIRAL1-like 1 (113 aa).

The span at 1 to 12 (MGRGVSVGGGQS) shows a compositional bias: gly residues. Residues 1–50 (MGRGVSVGGGQSSLGYLFGSGEAPKPAINNAPAPSSETLPISADPSPKHV) form a disordered region. The segment covering 23-34 (APKPAINNAPAP) has biased composition (low complexity). The residue at position 69 (S69) is a Phosphoserine. The tract at residues 79–113 (QNTGNFLTDRPSTKVHAAPGGGSSLDYLFGGGGSN) is disordered. The segment covering 97–113 (PGGGSSLDYLFGGGGSN) has biased composition (gly residues).

Belongs to the SPIRAL1 family. As to expression, detected in pollen of mature flowers.

Its function is as follows. Acts redundantly with SPR1 in maintaining the cortical microtubules organization essential for anisotropic cell growth. The sequence is that of Protein SPIRAL1-like 1 (SP1L1) from Arabidopsis thaliana (Mouse-ear cress).